The following is a 207-amino-acid chain: Ribosomal RNA small subunit methyltransferase G (207 aa).

S-adenosyl-L-methionine contacts are provided by residues Gly-73, Leu-78, 124–125 (VE), and Arg-139.

It belongs to the methyltransferase superfamily. RNA methyltransferase RsmG family.

It is found in the cytoplasm. The catalysed reaction is guanosine(527) in 16S rRNA + S-adenosyl-L-methionine = N(7)-methylguanosine(527) in 16S rRNA + S-adenosyl-L-homocysteine. In terms of biological role, specifically methylates the N7 position of guanine in position 527 of 16S rRNA. This is Ribosomal RNA small subunit methyltransferase G from Salmonella agona (strain SL483).